A 321-amino-acid polypeptide reads, in one-letter code: Cytochrome f (321 aa).

An N-terminal signal peptide occupies residues 1 to 38 (MKKNFYTISKTMSRSLKLILFSVFIGFSIFLIPQPTWA). 4 residues coordinate heme: Tyr39, Cys59, Cys62, and His63. Residues 288-308 (VIGMIIFFIGVGLSQIMLVLK) form a helical membrane-spanning segment.

This sequence belongs to the cytochrome f family. The 4 large subunits of the cytochrome b6-f complex are cytochrome b6, subunit IV (17 kDa polypeptide, PetD), cytochrome f and the Rieske protein, while the 4 small subunits are PetG, PetL, PetM and PetN. The complex functions as a dimer. Requires heme as cofactor.

It localises to the cellular thylakoid membrane. Functionally, component of the cytochrome b6-f complex, which mediates electron transfer between photosystem II (PSII) and photosystem I (PSI), cyclic electron flow around PSI, and state transitions. The polypeptide is Cytochrome f (Prochlorococcus marinus (strain NATL1A)).